The following is a 69-amino-acid chain: Putative membrane protein insertion efficiency factor (69 aa).

It belongs to the UPF0161 family.

It localises to the cell membrane. Functionally, could be involved in insertion of integral membrane proteins into the membrane. The chain is Putative membrane protein insertion efficiency factor from Clostridium botulinum (strain Okra / Type B1).